The chain runs to 522 residues: ATP synthase subunit alpha (522 aa).

176–183 (GDRQTGKT) contributes to the ATP binding site.

It belongs to the ATPase alpha/beta chains family. In terms of assembly, F-type ATPases have 2 components, CF(1) - the catalytic core - and CF(0) - the membrane proton channel. CF(1) has five subunits: alpha(3), beta(3), gamma(1), delta(1), epsilon(1). CF(0) has four main subunits: a, b, b' and c.

Its subcellular location is the cell membrane. The catalysed reaction is ATP + H2O + 4 H(+)(in) = ADP + phosphate + 5 H(+)(out). Functionally, produces ATP from ADP in the presence of a proton gradient across the membrane. The alpha chain is a regulatory subunit. The polypeptide is ATP synthase subunit alpha (Chloroflexus aggregans (strain MD-66 / DSM 9485)).